Here is a 141-residue protein sequence, read N- to C-terminus: Large ribosomal subunit protein uL11 (141 aa).

Belongs to the universal ribosomal protein uL11 family. As to quaternary structure, part of the ribosomal stalk of the 50S ribosomal subunit. Interacts with L10 and the large rRNA to form the base of the stalk. L10 forms an elongated spine to which L12 dimers bind in a sequential fashion forming a multimeric L10(L12)X complex. One or more lysine residues are methylated.

Functionally, forms part of the ribosomal stalk which helps the ribosome interact with GTP-bound translation factors. In Chloroflexus aurantiacus (strain ATCC 29366 / DSM 635 / J-10-fl), this protein is Large ribosomal subunit protein uL11.